The sequence spans 485 residues: Protein DETOXIFICATION 14 (485 aa).

12 helical membrane passes run 30 to 50 (LSYI…LQVI), 68 to 88 (IAVS…ASAL), 112 to 132 (IVSL…IGDI), 147 to 167 (GKFA…QPLV), 175 to 195 (LILP…VLCW), 207 to 227 (GAAI…GLYM), 259 to 279 (ASMI…SGIL), 288 to 308 (VLSV…SLGA), 329 to 349 (AVYT…AIVF), 372 to 392 (MAPL…LSGV), 405 to 425 (VNLA…AFGF), and 432 to 452 (LWIG…LIVI).

The protein belongs to the multi antimicrobial extrusion (MATE) (TC 2.A.66.1) family.

Its subcellular location is the membrane. This chain is Protein DETOXIFICATION 14, found in Arabidopsis thaliana (Mouse-ear cress).